A 489-amino-acid polypeptide reads, in one-letter code: Hydantoin permease (489 aa).

The next 12 helical transmembrane spans lie at 30–50 (FSLA…IAAG), 58–78 (VWQV…LLFF), 104–124 (LIPI…QTWL), 144–164 (LWIV…ITFI), 167–187 (MNVF…YLML), 207–227 (MPFS…VVSI), 258–278 (LGMV…MVLV), 299–321 (AILF…NLLS), 339–359 (GVIV…AGVL), 362–382 (FLNL…SDYF), 405–424 (RGVN…VSFL), and 428–445 (LMFV…IPAM). Residues alanine 38 and isoleucine 41 each coordinate Na(+). Glutamine 121 contacts substrate. Glycine 219 contributes to the substrate binding site. Na(+)-binding residues include alanine 309, serine 312, and threonine 313. Asparagine 318 provides a ligand contact to substrate. The disordered stretch occupies residues 468–489 (PIGPVAPADESATANTKEQNQR). A compositionally biased stretch (polar residues) spans 479–489 (ATANTKEQNQR).

The protein belongs to the purine-cytosine permease (2.A.39) family.

It localises to the membrane. With respect to regulation, inhibited by dinitrophenol, 5-(2-naphthylmethyl)-D-hydantoin (D-NMH), 5-(2-naphthylmethyl)-L-hydantoin (L-NMH), 5-bromovinylhydantoin (BVH) and 5-indolylmethyl-L-hydantoin (L-IMH). The affinity of benzyl-hydantoin is increased over 10-fold in the presence of 15 mM of sodium. Nucleobase-proton symporter that mediates the sodium-dependent binding and uptake of 5-aryl-substituted hydantoin compounds. 5-indolyl methyl hydantoin and 5-benzyl hydantoin are the preferred substrates, with selectivity for a hydrophobic substituent in position 5 of hydantoin and for the L isomer over the D isomer. In Microbacterium maritypicum (Microbacterium liquefaciens), this protein is Hydantoin permease.